We begin with the raw amino-acid sequence, 300 residues long: Protein FANTASTIC FOUR 4 (300 aa).

A compositionally biased stretch (polar residues) spans 30–56 (PQLSTPLKSHFQNSSIAPQDNPITINA). 3 disordered regions span residues 30-104 (PQLS…SPSS), 142-170 (TMET…LPPP), and 227-264 (TETK…KEEE). Composition is skewed to low complexity over residues 58 to 88 (SLPS…NSSS) and 142 to 151 (TMETRTTSTT). The region spanning 166 to 217 (SLPPPLTSMIGFDCIEVKSHRENGRLVMMATRPPPRNRCLQDRSNGCVRLAI) is the FAF domain. The span at 233–262 (KEEEEEETIETVRDNEEEIPEYKEEEEEKE) shows a compositional bias: acidic residues.

Belongs to the fantastic four family. Expressed in the shoot apex and young siliques. Detected in provascular and vascular tissue, but not in the vegetative meristem. In inflorescences, restricted to the base of the flower and to the vasculature of the stem and the pedicels, but absent from young flowers. Detected in the center of the inflorescence meristem.

Its function is as follows. Regulates the size of the shoot meristem by modulating the CLV3-WUS feedback loop. Can repress WUS but is under negative control by CLV3. The polypeptide is Protein FANTASTIC FOUR 4 (FAF4) (Arabidopsis thaliana (Mouse-ear cress)).